A 378-amino-acid polypeptide reads, in one-letter code: Squalene methyltransferase 2 (378 aa).

A helical transmembrane segment spans residues 17–37; the sequence is LLTVKGATGLIAALILGYIII.

The protein belongs to the class I-like SAM-binding methyltransferase superfamily. Erg6/SMT family.

It localises to the microsome membrane. The catalysed reaction is squalene + 2 S-adenosyl-L-methionine = 3,22-dimethyl-1,2,23,24-tetradehydro-2,3,22,23-tetrahydrosqualene + 2 S-adenosyl-L-homocysteine + 2 H(+). In terms of biological role, converts squalene to mono- and dimethyl derivatives, but not to tri- and tetramethylated products. Unable to methylate cycloartenol, zymosterol or lanosterol. Methylates both C-3 and C22 positions, but only C-3 position in monomethylated products. Produces mainly monomethylated squalene and only 20% of dimethylated squalene. In Botryococcus braunii (Green alga), this protein is Squalene methyltransferase 2 (TMT-2).